The primary structure comprises 758 residues: 5-methyltetrahydropteroyltriglutamate--homocysteine methyltransferase (758 aa).

5-methyltetrahydropteroyltri-L-glutamate-binding positions include 16-19 (RELK) and Lys-112. Residues 433–435 (IGS) and Glu-486 contribute to the L-homocysteine site. Residues 433-435 (IGS) and Glu-486 each bind L-methionine. Residues 517 to 518 (RC) and Trp-563 each bind 5-methyltetrahydropteroyltri-L-glutamate. Asp-601 contacts L-homocysteine. Asp-601 serves as a coordination point for L-methionine. Glu-607 provides a ligand contact to 5-methyltetrahydropteroyltri-L-glutamate. 3 residues coordinate Zn(2+): His-643, Cys-645, and Glu-667. His-696 (proton donor) is an active-site residue. Cys-728 serves as a coordination point for Zn(2+).

It belongs to the vitamin-B12 independent methionine synthase family. The cofactor is Zn(2+).

It catalyses the reaction 5-methyltetrahydropteroyltri-L-glutamate + L-homocysteine = tetrahydropteroyltri-L-glutamate + L-methionine. Its pathway is amino-acid biosynthesis; L-methionine biosynthesis via de novo pathway; L-methionine from L-homocysteine (MetE route): step 1/1. Functionally, catalyzes the transfer of a methyl group from 5-methyltetrahydrofolate to homocysteine resulting in methionine formation. In Neisseria meningitidis serogroup B (strain ATCC BAA-335 / MC58), this protein is 5-methyltetrahydropteroyltriglutamate--homocysteine methyltransferase.